The sequence spans 500 residues: Beta-glucosidase 2 (500 aa).

An N-terminal signal peptide occupies residues 1–24 (MGAAAAAGFFFVLLFLSVQGGAVG). Residues Gln44 and His144 each contribute to the a beta-D-glucoside site. Residue Glu190 is the Proton donor of the active site. Cys209 and Cys218 are disulfide-bonded. Asn222 carries N-linked (GlcNAc...) asparagine glycosylation. Tyr334 and Glu403 together coordinate a beta-D-glucoside. Catalysis depends on Glu403, which acts as the Nucleophile. A glycan (N-linked (GlcNAc...) asparagine) is linked at Asn410. Trp445 contacts a beta-D-glucoside.

Belongs to the glycosyl hydrolase 1 family.

It carries out the reaction Hydrolysis of terminal, non-reducing beta-D-glucosyl residues with release of beta-D-glucose.. The chain is Beta-glucosidase 2 (BGLU2) from Oryza sativa subsp. japonica (Rice).